A 218-amino-acid chain; its full sequence is Uracil-DNA glycosylase (218 aa).

The active-site Proton acceptor is the D68.

This sequence belongs to the uracil-DNA glycosylase (UDG) superfamily. UNG family. In terms of assembly, homodimer. Interacts with protein OPG148. Component of the Uracil-DNA glycosylase(UDG)-OPG148-polymerase complex; OPG148 and UDG form a heterodimeric processivity factor that associates with OPG71 to form the processive polymerase holoenzyme.

It catalyses the reaction Hydrolyzes single-stranded DNA or mismatched double-stranded DNA and polynucleotides, releasing free uracil.. In terms of biological role, plays an essential role in viral replication as a component of the DNA polymerase processivity factor. Excises uracil residues from the DNA which can arise as a result of misincorporation of dUMP residues by DNA polymerase or due to deamination of cytosine. The sequence is that of Uracil-DNA glycosylase (OPG116) from Vaccinia virus (strain Ankara) (VACV).